A 236-amino-acid chain; its full sequence is Small ribosomal subunit protein uS3 (236 aa).

The KH type-2 domain maps to 39-107; that stretch reads IREILHKELK…DVVINIVEIR (69 aa). Residues 213–236 are disordered; that stretch reads MAQDKRMNEGGGESSQPRSRRDAA.

It belongs to the universal ribosomal protein uS3 family. Part of the 30S ribosomal subunit. Forms a tight complex with proteins S10 and S14.

Binds the lower part of the 30S subunit head. Binds mRNA in the 70S ribosome, positioning it for translation. The polypeptide is Small ribosomal subunit protein uS3 (Bradyrhizobium sp. (strain BTAi1 / ATCC BAA-1182)).